We begin with the raw amino-acid sequence, 325 residues long: tRNA U34 carboxymethyltransferase (325 aa).

Carboxy-S-adenosyl-L-methionine-binding positions include lysine 91, tryptophan 105, lysine 110, glycine 130, 152–154 (DPS), 181–182 (ME), methionine 197, tyrosine 201, and arginine 316.

It belongs to the class I-like SAM-binding methyltransferase superfamily. CmoB family. As to quaternary structure, homotetramer.

The catalysed reaction is carboxy-S-adenosyl-L-methionine + 5-hydroxyuridine(34) in tRNA = 5-carboxymethoxyuridine(34) in tRNA + S-adenosyl-L-homocysteine + H(+). Its function is as follows. Catalyzes carboxymethyl transfer from carboxy-S-adenosyl-L-methionine (Cx-SAM) to 5-hydroxyuridine (ho5U) to form 5-carboxymethoxyuridine (cmo5U) at position 34 in tRNAs. The polypeptide is tRNA U34 carboxymethyltransferase (Saccharophagus degradans (strain 2-40 / ATCC 43961 / DSM 17024)).